Here is a 244-residue protein sequence, read N- to C-terminus: Transcriptional activator protein PhzR (244 aa).

Residues alanine 177–glycine 242 enclose the HTH luxR-type domain. The segment at residues serine 201 to arginine 220 is a DNA-binding region (H-T-H motif).

It belongs to the autoinducer-regulated transcriptional regulatory protein family.

Functionally, positive regulator of phenazine antibiotic production. May activate the phenazine biosynthetic genes by binding to a DNA sequence upstream of them, or to an intermediate gene which, in turn, interacts with them. The polypeptide is Transcriptional activator protein PhzR (phzR) (Pseudomonas fluorescens).